The primary structure comprises 373 residues: Dual-specificity RNA methyltransferase RlmN (373 aa).

The active-site Proton acceptor is the Glu-94. Residues 100–339 enclose the Radical SAM core domain; that stretch reads EDDRATLCVS…VIVRKTRGDD (240 aa). Cys-107 and Cys-344 are oxidised to a cystine. [4Fe-4S] cluster-binding residues include Cys-114, Cys-118, and Cys-121. S-adenosyl-L-methionine-binding positions include 168 to 169, Ser-200, 222 to 224, and Asn-301; these read GE and SIH. The active-site S-methylcysteine intermediate is Cys-344.

The protein belongs to the radical SAM superfamily. RlmN family. Requires [4Fe-4S] cluster as cofactor.

It localises to the cytoplasm. The enzyme catalyses adenosine(2503) in 23S rRNA + 2 reduced [2Fe-2S]-[ferredoxin] + 2 S-adenosyl-L-methionine = 2-methyladenosine(2503) in 23S rRNA + 5'-deoxyadenosine + L-methionine + 2 oxidized [2Fe-2S]-[ferredoxin] + S-adenosyl-L-homocysteine. The catalysed reaction is adenosine(37) in tRNA + 2 reduced [2Fe-2S]-[ferredoxin] + 2 S-adenosyl-L-methionine = 2-methyladenosine(37) in tRNA + 5'-deoxyadenosine + L-methionine + 2 oxidized [2Fe-2S]-[ferredoxin] + S-adenosyl-L-homocysteine. In terms of biological role, specifically methylates position 2 of adenine 2503 in 23S rRNA and position 2 of adenine 37 in tRNAs. m2A2503 modification seems to play a crucial role in the proofreading step occurring at the peptidyl transferase center and thus would serve to optimize ribosomal fidelity. The chain is Dual-specificity RNA methyltransferase RlmN from Shewanella sp. (strain ANA-3).